The sequence spans 600 residues: Elongation factor 4 (600 aa).

In terms of domain architecture, tr-type G spans 4 to 186 (SKIRNFSIIA…EIVKKIPAPQ (183 aa)). GTP-binding positions include 16–21 (DHGKST) and 133–136 (NKID).

This sequence belongs to the TRAFAC class translation factor GTPase superfamily. Classic translation factor GTPase family. LepA subfamily.

The protein resides in the cell inner membrane. The enzyme catalyses GTP + H2O = GDP + phosphate + H(+). Its function is as follows. Required for accurate and efficient protein synthesis under certain stress conditions. May act as a fidelity factor of the translation reaction, by catalyzing a one-codon backward translocation of tRNAs on improperly translocated ribosomes. Back-translocation proceeds from a post-translocation (POST) complex to a pre-translocation (PRE) complex, thus giving elongation factor G a second chance to translocate the tRNAs correctly. Binds to ribosomes in a GTP-dependent manner. This Trichlorobacter lovleyi (strain ATCC BAA-1151 / DSM 17278 / SZ) (Geobacter lovleyi) protein is Elongation factor 4.